The sequence spans 521 residues: CDP-diacylglycerol--glycerol-3-phosphate 3-phosphatidyltransferase (521 aa).

Residue 91 to 98 participates in ATP binding; sequence ASLYLGKS. PLD phosphodiesterase domains are found at residues 177 to 203 and 419 to 457; these read GLGL…SNDY and NGWS…TRRA. Catalysis depends on residues His182, Lys184, and Asp189.

This sequence belongs to the CDP-alcohol phosphatidyltransferase class-II family.

The protein localises to the mitochondrion. It catalyses the reaction a CDP-1,2-diacyl-sn-glycerol + sn-glycerol 3-phosphate = a 1,2-diacyl-sn-glycero-3-phospho-(1'-sn-glycero-3'-phosphate) + CMP + H(+). The protein operates within phospholipid metabolism; phosphatidylglycerol biosynthesis; phosphatidylglycerol from CDP-diacylglycerol: step 1/2. Essential for the viability of mitochondrial petite mutant. Catalyzes the committed step to the synthesis of the acidic phospholipids. The protein is CDP-diacylglycerol--glycerol-3-phosphate 3-phosphatidyltransferase (PGS1) of Saccharomyces cerevisiae (strain ATCC 204508 / S288c) (Baker's yeast).